The chain runs to 214 residues: 3-isopropylmalate dehydratase small subunit (214 aa).

It belongs to the LeuD family. LeuD type 1 subfamily. As to quaternary structure, heterodimer of LeuC and LeuD.

It catalyses the reaction (2R,3S)-3-isopropylmalate = (2S)-2-isopropylmalate. Its pathway is amino-acid biosynthesis; L-leucine biosynthesis; L-leucine from 3-methyl-2-oxobutanoate: step 2/4. Its function is as follows. Catalyzes the isomerization between 2-isopropylmalate and 3-isopropylmalate, via the formation of 2-isopropylmaleate. In Pseudomonas putida (strain GB-1), this protein is 3-isopropylmalate dehydratase small subunit.